The following is a 373-amino-acid chain: Dual-specificity RNA methyltransferase RlmN (373 aa).

Glu94 functions as the Proton acceptor in the catalytic mechanism. Positions 100–339 constitute a Radical SAM core domain; sequence EEDRATLCVS…VIVRKTRGDD (240 aa). The cysteines at positions 107 and 344 are disulfide-linked. [4Fe-4S] cluster contacts are provided by Cys114, Cys118, and Cys121. S-adenosyl-L-methionine contacts are provided by residues 168–169, Ser200, 222–224, and Asn301; these read GE and SIH. Cys344 serves as the catalytic S-methylcysteine intermediate.

Belongs to the radical SAM superfamily. RlmN family. The cofactor is [4Fe-4S] cluster.

Its subcellular location is the cytoplasm. The enzyme catalyses adenosine(2503) in 23S rRNA + 2 reduced [2Fe-2S]-[ferredoxin] + 2 S-adenosyl-L-methionine = 2-methyladenosine(2503) in 23S rRNA + 5'-deoxyadenosine + L-methionine + 2 oxidized [2Fe-2S]-[ferredoxin] + S-adenosyl-L-homocysteine. It catalyses the reaction adenosine(37) in tRNA + 2 reduced [2Fe-2S]-[ferredoxin] + 2 S-adenosyl-L-methionine = 2-methyladenosine(37) in tRNA + 5'-deoxyadenosine + L-methionine + 2 oxidized [2Fe-2S]-[ferredoxin] + S-adenosyl-L-homocysteine. Functionally, specifically methylates position 2 of adenine 2503 in 23S rRNA and position 2 of adenine 37 in tRNAs. m2A2503 modification seems to play a crucial role in the proofreading step occurring at the peptidyl transferase center and thus would serve to optimize ribosomal fidelity. The polypeptide is Dual-specificity RNA methyltransferase RlmN (Shewanella frigidimarina (strain NCIMB 400)).